Consider the following 100-residue polypeptide: Mitochondrial import inner membrane translocase subunit Tim10 B (100 aa).

A Twin CX3C motif motif is present at residues 25 to 49 (CFQRCVPSLHHRALDAEEEACLHSC). Intrachain disulfides connect Cys-25–Cys-49 and Cys-29–Cys-45.

It belongs to the small Tim family. In terms of assembly, component of the TIM22 complex, which core is composed of TIMM22, associated with TIMM10 (TIMM10A and/or TIMM10B), TIMM9, AGK and TIMM29.

The protein localises to the mitochondrion inner membrane. Functionally, component of the TIM22 complex, a complex that mediates the import and insertion of multi-pass transmembrane proteins into the mitochondrial inner membrane. The TIM22 complex forms a twin-pore translocase that uses the membrane potential as the external driving force. In the TIM22 complex, it may act as a docking point for the soluble 70 kDa complex that guides the target proteins in transit through the aqueous mitochondrial intermembrane space. This chain is Mitochondrial import inner membrane translocase subunit Tim10 B (Timm10b), found in Mus musculus (Mouse).